The primary structure comprises 1107 residues: Unconventional myosin-Ie (1107 aa).

In terms of domain architecture, Myosin motor spans 19–692 (SGVDDMVLLS…SLFLLEEMRE (674 aa)). 112–119 (GESGAGKT) contributes to the ATP binding site. An actin-binding region spans residues 581-591 (PHYIRCIKPNE). The region spanning 695-724 (YDGYARVIQKTWRKFVARKKYVQMREDASD) is the IQ domain. Residues 730-922 (KERRRNSINR…NKVLQVSIGP (193 aa)) enclose the TH1 domain. Residues 920–1052 (IGPGLPKNAR…KPQPKPKPQV (133 aa)) form a disordered region. Composition is skewed to polar residues over residues 933–949 (RNTV…NNNY), 977–989 (SGNQ…SLYT), and 998–1012 (RQQS…QTPE). Ser1001 carries the phosphoserine modification. A compositionally biased stretch (pro residues) spans 1034-1051 (RPPPAGGRPKPQPKPKPQ). The region spanning 1050–1107 (PQVPQCKALYAYDAQDTDELSFNANDVIDIIKEDPSGWWTGRLRGKQGLFPNNYVTKI) is the SH3 domain.

This sequence belongs to the TRAFAC class myosin-kinesin ATPase superfamily. Myosin family. Interacts with CALM and F-actin. Interacts (via SH3 domain) with SYNJ1, DNM1 and DNM2. Interacts with ARL14EP. Interacts with CARMIL1. In terms of tissue distribution, detected in brain stem, brain cortex, cerebellum, stomach, colon, heart, lung, liver, spleen and kidney. Detected in utricle, cochlea, outer hair cell bundle cuticular plate and vestibular epithelia (at protein level). Detected in cochlea and vestibular tissues. Detected in kidney, lung, spleen and intestine.

Its subcellular location is the cytoplasm. It is found in the cytoskeleton. The protein localises to the cytoplasmic vesicle. It localises to the clathrin-coated vesicle. The protein resides in the cell junction. In terms of biological role, myosins are actin-based motor molecules with ATPase activity. Unconventional myosins serve in intracellular movements. Their highly divergent tails bind to membranous compartments, which are then moved relative to actin filaments. Binds to membranes containing anionic phospholipids via its tail domain. Involved in clathrin-mediated endocytosis and intracellular movement of clathrin-coated vesicles. Required for normal morphology of the glomerular basement membrane, normal development of foot processes by kidney podocytes and normal kidney function. In dendritic cells, may control the movement of class II-containing cytoplasmic vesicles along the actin cytoskeleton by connecting them with the actin network via ARL14EP and ARL14. The sequence is that of Unconventional myosin-Ie (Myo1e) from Rattus norvegicus (Rat).